The sequence spans 156 residues: ATP synthase subunit b (156 aa).

The helical transmembrane segment at 7–29 (LLGQAISFGMFVWFCMKYVWPPI) threads the bilayer.

The protein belongs to the ATPase B chain family. In terms of assembly, F-type ATPases have 2 components, F(1) - the catalytic core - and F(0) - the membrane proton channel. F(1) has five subunits: alpha(3), beta(3), gamma(1), delta(1), epsilon(1). F(0) has three main subunits: a(1), b(2) and c(10-14). The alpha and beta chains form an alternating ring which encloses part of the gamma chain. F(1) is attached to F(0) by a central stalk formed by the gamma and epsilon chains, while a peripheral stalk is formed by the delta and b chains.

The protein localises to the cell inner membrane. In terms of biological role, f(1)F(0) ATP synthase produces ATP from ADP in the presence of a proton or sodium gradient. F-type ATPases consist of two structural domains, F(1) containing the extramembraneous catalytic core and F(0) containing the membrane proton channel, linked together by a central stalk and a peripheral stalk. During catalysis, ATP synthesis in the catalytic domain of F(1) is coupled via a rotary mechanism of the central stalk subunits to proton translocation. Functionally, component of the F(0) channel, it forms part of the peripheral stalk, linking F(1) to F(0). In Vibrio cholerae serotype O1 (strain ATCC 39541 / Classical Ogawa 395 / O395), this protein is ATP synthase subunit b.